The chain runs to 537 residues: O-phosphoserine--tRNA(Cys) ligase (537 aa).

Substrate contacts are provided by residues 186–188 (HMT), 231–233 (SAS), 273–274 (YY), and N317.

Belongs to the class-II aminoacyl-tRNA synthetase family. O-phosphoseryl-tRNA(Cys) synthetase subfamily. As to quaternary structure, homotetramer. Interacts with SepCysS.

It catalyses the reaction tRNA(Cys) + O-phospho-L-serine + ATP = O-phospho-L-seryl-tRNA(Cys) + AMP + diphosphate. Its function is as follows. Catalyzes the attachment of O-phosphoserine (Sep) to tRNA(Cys). This chain is O-phosphoserine--tRNA(Cys) ligase, found in Methanococcus maripaludis (strain C6 / ATCC BAA-1332).